The primary structure comprises 547 residues: Chaperonin GroEL 2 (547 aa).

ATP-binding positions include T30–P33, K51, D87–T91, G415, N479–A481, and D495. The tract at residues K526–M547 is disordered. Gly residues predominate over residues A533–M547.

The protein belongs to the chaperonin (HSP60) family. In terms of assembly, forms a cylinder of 14 subunits composed of two heptameric rings stacked back-to-back. Interacts with the co-chaperonin GroES.

It localises to the cytoplasm. It catalyses the reaction ATP + H2O + a folded polypeptide = ADP + phosphate + an unfolded polypeptide.. Together with its co-chaperonin GroES, plays an essential role in assisting protein folding. The GroEL-GroES system forms a nano-cage that allows encapsulation of the non-native substrate proteins and provides a physical environment optimized to promote and accelerate protein folding. This Anaeromyxobacter sp. (strain Fw109-5) protein is Chaperonin GroEL 2.